The primary structure comprises 179 residues: Ribosome maturation factor RimM (179 aa).

Positions Glu-101–Glu-179 constitute a PRC barrel domain.

The protein belongs to the RimM family. As to quaternary structure, binds ribosomal protein uS19.

The protein resides in the cytoplasm. In terms of biological role, an accessory protein needed during the final step in the assembly of 30S ribosomal subunit, possibly for assembly of the head region. Essential for efficient processing of 16S rRNA. May be needed both before and after RbfA during the maturation of 16S rRNA. It has affinity for free ribosomal 30S subunits but not for 70S ribosomes. In Treponema denticola (strain ATCC 35405 / DSM 14222 / CIP 103919 / JCM 8153 / KCTC 15104), this protein is Ribosome maturation factor RimM.